The following is a 226-amino-acid chain: Ribonuclease HII (226 aa).

An RNase H type-2 domain is found at 29–220 (GPVAGVDEAG…VAALLHRVDN (192 aa)). Residues Asp35, Glu36, and Asp129 each contribute to the a divalent metal cation site.

It belongs to the RNase HII family. Mn(2+) is required as a cofactor. Requires Mg(2+) as cofactor.

It localises to the cytoplasm. It carries out the reaction Endonucleolytic cleavage to 5'-phosphomonoester.. Functionally, endonuclease that specifically degrades the RNA of RNA-DNA hybrids. This chain is Ribonuclease HII, found in Rhodococcus opacus (strain B4).